A 606-amino-acid polypeptide reads, in one-letter code: Chaperone protein DnaK (606 aa).

Thr174 carries the phosphothreonine; by autocatalysis modification. The disordered stretch occupies residues 578–606; it reads YTQAGPQGGTNPGGQGGTDGNVNTDYKVY. Residues 583–596 are compositionally biased toward gly residues; that stretch reads PQGGTNPGGQGGTD.

It belongs to the heat shock protein 70 family.

Its function is as follows. Acts as a chaperone. This is Chaperone protein DnaK from Caldicellulosiruptor saccharolyticus (strain ATCC 43494 / DSM 8903 / Tp8T 6331).